The primary structure comprises 67 residues: Protein AaeX (67 aa).

The next 2 helical transmembrane spans lie at 3–23 and 43–63; these read LFPVFVVFGLSFPPIFFELIL and FVWHPALFNTALYCCLFYLIS.

The protein belongs to the AaeX family.

The protein resides in the cell membrane. The sequence is that of Protein AaeX from Enterobacter sp. (strain 638).